Consider the following 1265-residue polypeptide: Cohesin subunit SA-1 (1265 aa).

The span at 1-16 shows a compositional bias: polar residues; the sequence is MITSELSVLQDSTNES. Disordered regions lie at residues 1–21 and 37–91; these read MITS…VMHT and DLEV…EGDP. The segment covering 62–73 has biased composition (basic and acidic residues); sequence TPGDRSRAEPGS. One can recognise an SCD domain in the interval 303–388; sequence FVHRYRDAIA…NRFKDRIVSM (86 aa). 2 disordered regions span residues 1063-1097 and 1111-1130; these read GDED…KRVI and DTIQ…TVLR. The span at 1069 to 1082 shows a compositional bias: low complexity; the sequence is SVNSGGSNSKGSSV. A compositionally biased stretch (basic residues) spans 1083-1095; sequence RSKKGRPPLHKKR. Residues 1111 to 1129 are compositionally biased toward polar residues; that stretch reads DTIQTPGALTTPQLTSTVL.

This sequence belongs to the SCC3 family. In terms of assembly, interacts directly with RAD21 in cohesin complex. Cohesin complexes are composed of a heterodimer between and SMC3, which are attached via their hinge domain, and RAD21 which link them at their heads, and one STAG protein (STAG1 OR STAG2). In cohesin complexes, STAG1 is mutually exclusive with STAG2. Phosphorylated by PLK1. The large dissociation of cohesin from chromosome arms during prophase is partly due to its phosphorylation.

It localises to the nucleus. Its subcellular location is the chromosome. The protein resides in the centromere. Functionally, component of cohesin complex, a complex required for the cohesion of sister chromatids after DNA replication. The cohesin complex apparently forms a large proteinaceous ring within which sister chromatids can be trapped. At anaphase, the complex is cleaved and dissociates from chromatin, allowing sister chromatids to segregate. The cohesin complex may also play a role in spindle pole assembly during mitosis. The protein is Cohesin subunit SA-1 (stag1) of Xenopus laevis (African clawed frog).